A 137-amino-acid chain; its full sequence is Large ribosomal subunit protein uL16 (137 aa).

The protein belongs to the universal ribosomal protein uL16 family. Part of the 50S ribosomal subunit.

In terms of biological role, binds 23S rRNA and is also seen to make contacts with the A and possibly P site tRNAs. The protein is Large ribosomal subunit protein uL16 of Ruegeria pomeroyi (strain ATCC 700808 / DSM 15171 / DSS-3) (Silicibacter pomeroyi).